Reading from the N-terminus, the 613-residue chain is Dihydroxy-acid dehydratase (613 aa).

Asp81 contributes to the Mg(2+) binding site. Cys122 is a binding site for [2Fe-2S] cluster. The Mg(2+) site is built by Asp123 and Lys124. Lys124 bears the N6-carboxylysine mark. Cys193 is a binding site for [2Fe-2S] cluster. Glu489 contributes to the Mg(2+) binding site. Catalysis depends on Ser515, which acts as the Proton acceptor.

This sequence belongs to the IlvD/Edd family. As to quaternary structure, homodimer. Requires [2Fe-2S] cluster as cofactor. Mg(2+) serves as cofactor.

The enzyme catalyses (2R)-2,3-dihydroxy-3-methylbutanoate = 3-methyl-2-oxobutanoate + H2O. The catalysed reaction is (2R,3R)-2,3-dihydroxy-3-methylpentanoate = (S)-3-methyl-2-oxopentanoate + H2O. Its pathway is amino-acid biosynthesis; L-isoleucine biosynthesis; L-isoleucine from 2-oxobutanoate: step 3/4. It participates in amino-acid biosynthesis; L-valine biosynthesis; L-valine from pyruvate: step 3/4. In terms of biological role, functions in the biosynthesis of branched-chain amino acids. Catalyzes the dehydration of (2R,3R)-2,3-dihydroxy-3-methylpentanoate (2,3-dihydroxy-3-methylvalerate) into 2-oxo-3-methylpentanoate (2-oxo-3-methylvalerate) and of (2R)-2,3-dihydroxy-3-methylbutanoate (2,3-dihydroxyisovalerate) into 2-oxo-3-methylbutanoate (2-oxoisovalerate), the penultimate precursor to L-isoleucine and L-valine, respectively. The sequence is that of Dihydroxy-acid dehydratase from Pseudomonas fluorescens (strain ATCC BAA-477 / NRRL B-23932 / Pf-5).